A 69-amino-acid chain; its full sequence is Large ribosomal subunit protein uL29 (69 aa).

Belongs to the universal ribosomal protein uL29 family.

This Synechococcus sp. (strain WH7803) protein is Large ribosomal subunit protein uL29.